The chain runs to 131 residues: D-ribose pyranase (131 aa).

His-20 acts as the Proton donor in catalysis. Substrate contacts are provided by residues Asp-28, His-98, and 120-122; that span reads YCN.

Belongs to the RbsD / FucU family. RbsD subfamily. In terms of assembly, homodecamer.

The protein localises to the cytoplasm. The catalysed reaction is beta-D-ribopyranose = beta-D-ribofuranose. The protein operates within carbohydrate metabolism; D-ribose degradation; D-ribose 5-phosphate from beta-D-ribopyranose: step 1/2. Functionally, catalyzes the interconversion of beta-pyran and beta-furan forms of D-ribose. This Coprothermobacter proteolyticus (strain ATCC 35245 / DSM 5265 / OCM 4 / BT) protein is D-ribose pyranase.